The primary structure comprises 578 residues: 15-cis-phytoene desaturase, chloroplastic/chromoplastic (578 aa).

The transit peptide at 1 to 87 (MDTGCLSSMN…PLENTINFLE (87 aa)) directs the protein to the chloroplast and chromoplast. FAD is bound by residues Ala115, 134–135 (EA), Lys142, 159–160 (HI), and Tyr165. Residue Arg300 coordinates substrate. Positions 342 and 531 each coordinate FAD. Residue Ala539 participates in substrate binding. Residue Met541 participates in FAD binding.

It belongs to the carotenoid/retinoid oxidoreductase family. In terms of assembly, homotetramer. Homotetramer is the active form of the enzyme. Requires FAD as cofactor.

Its subcellular location is the plastid. It localises to the chloroplast. The protein resides in the chromoplast. The protein localises to the membrane. It carries out the reaction 2 a plastoquinone + 15-cis-phytoene = 9,9',15-tri-cis-zeta-carotene + 2 a plastoquinol. Its pathway is carotenoid biosynthesis; lycopene biosynthesis. With respect to regulation, inhibited by the herbicide norflurazon (NFZ). Its function is as follows. Converts phytoene into zeta-carotene via the intermediary of phytofluene by the symmetrical introduction of two double bonds at the C-11 and C-11' positions of phytoene with a concomitant isomerization of two neighboring double bonds at the C9 and C9' positions from trans to cis. Active with decylplastoquinone (DPQ) as substrate. Also active with other benzoquinones, which are strongly preferred over naphthoquinones as substrates. This is 15-cis-phytoene desaturase, chloroplastic/chromoplastic (PDS1) from Oryza sativa subsp. indica (Rice).